Here is a 427-residue protein sequence, read N- to C-terminus: Probable transcription factor At5g28040 (427 aa).

Positions 1–81 (MASDQRDTDF…APATKSSSGT (81 aa)) are disordered. At Ser14 the chain carries Phosphoserine. The span at 22 to 32 (GGGGGGRGGGE) shows a compositional bias: gly residues. The segment covering 33–62 (TESDEDVVIPEPNEAEDDDHDPDPDPEYED) has biased composition (acidic residues).

This sequence belongs to the GeBP family.

The chain is Probable transcription factor At5g28040 from Arabidopsis thaliana (Mouse-ear cress).